The chain runs to 249 residues: 2,3-bisphosphoglycerate-dependent phosphoglycerate mutase (249 aa).

Substrate-binding positions include 9 to 16 (RHGESEWN), 22 to 23 (TG), Arg-61, 88 to 91 (ERHY), Lys-99, 115 to 116 (RR), and 184 to 185 (GN). His-10 acts as the Tele-phosphohistidine intermediate in catalysis. Glu-88 serves as the catalytic Proton donor/acceptor.

This sequence belongs to the phosphoglycerate mutase family. BPG-dependent PGAM subfamily.

It catalyses the reaction (2R)-2-phosphoglycerate = (2R)-3-phosphoglycerate. It functions in the pathway carbohydrate degradation; glycolysis; pyruvate from D-glyceraldehyde 3-phosphate: step 3/5. Its function is as follows. Catalyzes the interconversion of 2-phosphoglycerate and 3-phosphoglycerate. The polypeptide is 2,3-bisphosphoglycerate-dependent phosphoglycerate mutase (Cutibacterium acnes (strain DSM 16379 / KPA171202) (Propionibacterium acnes)).